We begin with the raw amino-acid sequence, 336 residues long: Dihydroorotate dehydrogenase (quinone) (336 aa).

Residues 62-66 and Thr-86 contribute to the FMN site; that span reads AGLDK. Lys-66 contributes to the substrate binding site. 111–115 serves as a coordination point for substrate; the sequence is NRFGF. The FMN site is built by Asn-139 and Asn-172. Asn-172 provides a ligand contact to substrate. The Nucleophile role is filled by Ser-175. Asn-177 is a binding site for substrate. FMN contacts are provided by Lys-217 and Thr-245. 246 to 247 provides a ligand contact to substrate; it reads NT. FMN-binding positions include Gly-268, Gly-297, and 318–319; that span reads YS.

The protein belongs to the dihydroorotate dehydrogenase family. Type 2 subfamily. As to quaternary structure, monomer. The cofactor is FMN.

The protein resides in the cell membrane. The enzyme catalyses (S)-dihydroorotate + a quinone = orotate + a quinol. Its pathway is pyrimidine metabolism; UMP biosynthesis via de novo pathway; orotate from (S)-dihydroorotate (quinone route): step 1/1. In terms of biological role, catalyzes the conversion of dihydroorotate to orotate with quinone as electron acceptor. The chain is Dihydroorotate dehydrogenase (quinone) from Photobacterium profundum (strain SS9).